Reading from the N-terminus, the 60-residue chain is Large ribosomal subunit protein uL30 (60 aa).

Belongs to the universal ribosomal protein uL30 family. As to quaternary structure, part of the 50S ribosomal subunit.

The chain is Large ribosomal subunit protein uL30 from Streptomyces filamentosus (Streptomyces roseosporus).